A 210-amino-acid chain; its full sequence is Somatotropin-2 (210 aa).

A signal peptide spans 1–22 (MGQVFLLMPVLLVSCFLSQGAA). Residue H38 participates in Zn(2+) binding. C71 and C183 are joined by a disulfide. E192 contributes to the Zn(2+) binding site. An intrachain disulfide couples C200 to C208.

This sequence belongs to the somatotropin/prolactin family.

It localises to the secreted. Its function is as follows. Growth hormone plays an important role in growth control and is involved in the regulation of several anabolic processes. Implicated as an osmoregulatory substance important for seawater adaptation. In Oncorhynchus nerka (Sockeye salmon), this protein is Somatotropin-2 (gh2).